The primary structure comprises 345 residues: Dihydroorotase (345 aa).

Zn(2+) contacts are provided by histidine 14 and histidine 16. Substrate-binding positions include 16 to 18 and asparagine 42; that span reads HLR. The Zn(2+) site is built by lysine 102, histidine 139, and histidine 177. Lysine 102 is subject to N6-carboxylysine. Histidine 139 lines the substrate pocket. Residue leucine 222 coordinates substrate. A Zn(2+)-binding site is contributed by aspartate 250. Aspartate 250 is a catalytic residue. Substrate-binding residues include histidine 254 and alanine 266.

It belongs to the metallo-dependent hydrolases superfamily. DHOase family. Class II DHOase subfamily. In terms of assembly, homodimer. The cofactor is Zn(2+).

The catalysed reaction is (S)-dihydroorotate + H2O = N-carbamoyl-L-aspartate + H(+). Its pathway is pyrimidine metabolism; UMP biosynthesis via de novo pathway; (S)-dihydroorotate from bicarbonate: step 3/3. Functionally, catalyzes the reversible cyclization of carbamoyl aspartate to dihydroorotate. The chain is Dihydroorotase from Nitrosomonas eutropha (strain DSM 101675 / C91 / Nm57).